The following is a 932-amino-acid chain: Isoleucine--tRNA ligase (932 aa).

A 'HIGH' region motif is present at residues 59–69 (PYANGTIHIGH). L-isoleucyl-5'-AMP is bound at residue Glu562. A 'KMSKS' region motif is present at residues 603 to 607 (KMSKS). Lys606 provides a ligand contact to ATP. The Zn(2+) site is built by Cys899, Cys902, Cys915, and Cys918.

Belongs to the class-I aminoacyl-tRNA synthetase family. IleS type 1 subfamily. In terms of assembly, monomer. Requires Zn(2+) as cofactor.

It localises to the cytoplasm. It catalyses the reaction tRNA(Ile) + L-isoleucine + ATP = L-isoleucyl-tRNA(Ile) + AMP + diphosphate. Catalyzes the attachment of isoleucine to tRNA(Ile). As IleRS can inadvertently accommodate and process structurally similar amino acids such as valine, to avoid such errors it has two additional distinct tRNA(Ile)-dependent editing activities. One activity is designated as 'pretransfer' editing and involves the hydrolysis of activated Val-AMP. The other activity is designated 'posttransfer' editing and involves deacylation of mischarged Val-tRNA(Ile). The chain is Isoleucine--tRNA ligase from Pasteurella multocida (strain Pm70).